A 504-amino-acid chain; its full sequence is ATP synthase subunit alpha, chloroplastic (504 aa).

170 to 177 (GDRQTGKT) provides a ligand contact to ATP.

This sequence belongs to the ATPase alpha/beta chains family. As to quaternary structure, F-type ATPases have 2 components, CF(1) - the catalytic core - and CF(0) - the membrane proton channel. CF(1) has five subunits: alpha(3), beta(3), gamma(1), delta(1), epsilon(1). CF(0) has four main subunits: a, b, b' and c.

The protein resides in the plastid. It localises to the chloroplast thylakoid membrane. It catalyses the reaction ATP + H2O + 4 H(+)(in) = ADP + phosphate + 5 H(+)(out). Functionally, produces ATP from ADP in the presence of a proton gradient across the membrane. The alpha chain is a regulatory subunit. The protein is ATP synthase subunit alpha, chloroplastic of Triticum aestivum (Wheat).